An 80-amino-acid chain; its full sequence is Acyl carrier protein (80 aa).

Positions 4–79 (ANVEQKVKNI…DAVNYITTHK (76 aa)) constitute a Carrier domain. S39 is subject to O-(pantetheine 4'-phosphoryl)serine.

Belongs to the acyl carrier protein (ACP) family. In terms of processing, 4'-phosphopantetheine is transferred from CoA to a specific serine of apo-ACP by AcpS. This modification is essential for activity because fatty acids are bound in thioester linkage to the sulfhydryl of the prosthetic group.

It is found in the cytoplasm. It functions in the pathway lipid metabolism; fatty acid biosynthesis. In terms of biological role, carrier of the growing fatty acid chain in fatty acid biosynthesis. The protein is Acyl carrier protein of Anaeromyxobacter sp. (strain Fw109-5).